The following is a 364-amino-acid chain: Chorismate synthase (364 aa).

Residue arginine 47 participates in NADP(+) binding. FMN-binding positions include 124–126 (RAS), glycine 287, 302–306 (KPTAT), and arginine 328.

Belongs to the chorismate synthase family. Homotetramer. FMNH2 is required as a cofactor.

The catalysed reaction is 5-O-(1-carboxyvinyl)-3-phosphoshikimate = chorismate + phosphate. It functions in the pathway metabolic intermediate biosynthesis; chorismate biosynthesis; chorismate from D-erythrose 4-phosphate and phosphoenolpyruvate: step 7/7. Its function is as follows. Catalyzes the anti-1,4-elimination of the C-3 phosphate and the C-6 proR hydrogen from 5-enolpyruvylshikimate-3-phosphate (EPSP) to yield chorismate, which is the branch point compound that serves as the starting substrate for the three terminal pathways of aromatic amino acid biosynthesis. This reaction introduces a second double bond into the aromatic ring system. The protein is Chorismate synthase of Prochlorococcus marinus (strain MIT 9515).